An 847-amino-acid polypeptide reads, in one-letter code: Collagen alpha-1(I) chain (847 aa).

Residues 1-847 (GPMGPSGPRG…PGPIGPPGPR (847 aa)) are disordered. The segment covering 20–39 (PQGFQGPPGEPGEPGSSGPM) has biased composition (low complexity). Over residues 51 to 65 (NGDDGEAGKPGRPGE) the composition is skewed to basic and acidic residues. At Ser85 the chain carries Phosphoserine. Composition is skewed to low complexity over residues 93 to 109 (DAGP…PGEN) and 127 to 145 (PGAS…TGAA). Pro residues predominate over residues 147–159 (PPGPTGPAGPPGF). 7 stretches are compositionally biased toward low complexity: residues 193 to 208 (AGAA…DGQP), 219 to 228 (QGPSGAPGPK), 298 to 314 (PKGI…DGKT), 334 to 343 (PGPKGAAGEP), 500 to 543 (PSGP…KGDA), 551 to 599 (PTGA…NAGA), and 628 to 638 (SPGADGPAGAP). The residue at position 501 (Ser501) is a Phosphoserine. Over residues 685-695 (PPGPMGPPGIA) the composition is skewed to pro residues. Positions 697–712 (PPGESGREGSPGAEGS) are enriched in low complexity. A compositionally biased stretch (pro residues) spans 731 to 746 (SGPPGAPGAPGAPGPV). Low complexity predominate over residues 763–777 (AGPAGARGPSGPQGP). The segment covering 778–789 (RGDKGETGEQGD) has biased composition (basic and acidic residues). Positions 793–838 (SGIQGPPGAPGSPGEQGPSGASGPAGPRGPPGSAGSPGKDGINGIP) are enriched in low complexity.

This sequence belongs to the fibrillar collagen family. Trimers of one alpha 2(I) and two alpha 1(I) chains. In terms of processing, prolines at the third position of the tripeptide repeating unit (G-X-Y) are hydroxylated in some or all of the chains. As to expression, forms the fibrils of tendon, ligaments and bones. In bones, the fibrils are mineralized with calcium hydroxyapatite.

The protein resides in the secreted. The protein localises to the extracellular space. Its subcellular location is the extracellular matrix. Type I collagen is a member of group I collagen (fibrillar forming collagen). In Cyclopes didactylus (Silky anteater), this protein is Collagen alpha-1(I) chain.